Reading from the N-terminus, the 3093-residue chain is MQQTHVKQVWRPKTASSKVKTSNMVYLAEESSPLAKTELKEDAVVAADMSVINADDAVYGHALEGKYSERKALPARSNETIVSFASGEDGLFLDRAACGSIFKTRTGKDTPIATAIRAATRRGLAYDIAAQLYMCPKCCSASDKVLYFDTNHNDSCQWYLDNCRAVINKDWTLDVIETYNVFPVLVTEEEERRTLEAVDIALKPLGTVPVHDVVQVYDQKIGEHKEVERNQEAAHGSEPAIITTTPVLRRQCIEKRLLRHVHQANKVIANTVEIYDLMTETSQICAEKAIPLVFVDYEKKKRIRPRVPLRHVLESNNVDPSDDLYADVVPFLKHYGTCGRPVGVINPRDIKPGWSGVVLLQDELPESLHQECVDGVFVVQGIGPDGQLKNALKTTTGERIEYYSSKRRMAVNAHVPKAHSFCKYSSLTETLMELDYLRVISALADVHDPQCVECHKERNERSFIENLKYTQQGAQNLFNAGTGMGLAFVASIASGQLMIQRQQPQSSSSIVDQTPRTNEDGSLSHNINLLLTPEVVDIWRSMKQMVHLPNRKLYMASFNDQFGNFDFIPNSTLQGVFPDFTMPVTIALNDDDKVETNYRHVDKNSTIETCVEGLYTQFDAAYWTKKAAQVHKIQPIDQCGMEIGNIALKLCHWEGDVALFSPIIRPTPGHLMFGSTDRLLRIPDMTNARHYVPKVGYCYLYLFALAMNFCDGENRVTVDAYINKTCRELGAWPKFGEVLRALDRMATYYGCYDAVVPVMLVDHVQRTIHVPSPFGIVQSGMHMIQINNLGDLIKLDTMGASELKEYEIGGFRETYKSITKCVKSKSAFMEKLNQDNEWLVDMICNPSTLFVLSQLMDTHGLILKDVENSFDRLAALLALKELGSALGPLLTTRKRVALYMQSLSKVDELVPHLGMPTGAMNLLKSEIELIQNAIVEEQDMAEIDRVEGKKSILERRDEMFAPCVYNEFINSFGYVSLPGIAYRLTYTGVGARIGRGCEHLKTVWSGSWIPEIHLPENLRSNTWSAIKKYTVYSGGTAWRYMKLKIVESATQILVAAVITAIGSWLLKKLLKFIRHEKGRLNEVVVFQSKQEELFISKFMAVCFVISTFFSLDMSNAIYSSLTKFRAIFSILSVGSIYQSGALEKLEEQLGHVDTFHEFKLYDHDATHANIAPSVQSFGTWLDTRVLAGQQGCDPLEGRHTKFEMNKNTRDAIAARVLADKDNEFLVMGHVGCGKSTYFPVALSKQARVLICEPTRVLVTNLHDSMMHTCQVAPSVMMRNHRCITGSSIMVQTYGFALHYLVNNPENLQQYDFVLFDEVHHTCAEKVVLYNWLKGRDWGGKIVKLTATDRSPSAEIKAQKSLDIMTLPTMTPLDFVKEQGLSTKADASKHGKVILVFLTSFREVDSCYDELKRKENFDAIKADSRNLRNKTSLADLISECKKEFIYIFATNILQTGINIEADVVVDFGYKIVPTYDVDNRMLTTTRKPVNKADRIQRLGRVARMKAGVAMKIGATIDPEAYDDEVTATEAALLSFAMQVPPVLRNVNLQIFQRITREQVVTAARFEHQLSYMVWMVNKDGSMPTKLYDLFSPLLLSQGNMRLSPYYSSLYDSDTFMTVKNYVDIGYLKHDRTTNQRLPFHCHDVSTTFAMKVADRFEDSRAPSTYSIRVPAVNLRHTAVKLSTDPAQVGMILVVIGEALVHQKNILEQLKSTRTQLDNYNSCILVPNWNVRGKLDDAINRVERNVSILENQKNSVEKMSVARGYDELKELLEENHAVAAHVMYQKGPQKFIDDVLLQKRDFSWMPYISVGAACLMAGCAWYMLYRQRAKHEAKFEGKASRVKASKQKAFDDKMARADNYTYYETTDELHNHAREWNDYPTDWVDKVRKKANVHAMQFGREAPRRDVRNDRPFFNFYGIDEKLYDTVTFHDMAASFSVEQPITAMEVEEAFEKIYLNRQEDEAFFDHPMPKKILAEFKGKDGKVINVEMEPHNPRKANRRGLPVGYADHRGEFRQAKPAEEGPIKFERKALNPKATPYAVFESKALYGGPRCYEHITNNQVLLAGPSGYLNGLITGSKLLAPYHFVKDISSDSQDPSRMIARFGTYNLGNILNLQVVKFTMIDLIGLDLPVEFQPRRTLKCFRVPVIGEKAVLVLSRYSKEGWKSCVSAETEITPYGENEELLWRHRITTEVGDCGATMVALSDQKIVGFHSLGGISMNYFVPVTQELLDFLSSKTEKPLVPWRFSEDQVDVGGLYIHNDFDKFPFVKTIQKLVGFQNGHMIKYCGEGFTPVARSENRLSRQHVISGQRESFIHFVEASSKWRPLITPMLGRLQPSALNREAYYKDVLKYDKPIRLGTVHEEAFQSAVINVIRILENAGFERGGVKACFDYGKIFNDLNLDAAMGALYAGKKKDYFVEATDEEIEEMFLRSAGKICANGHGVWSALLKAELRPAEKVAANKTRTFTSAPIDILFGAKAVVDDFNKQFYKRHLLGPWTVGINKFNKGWDLLARSLMRYEWFIDADGSQFDSSITPLLMNAVLTIRLYFMERDDITELMLRNLYTQIISTCMLAEDGLIVQKHRGNNSGQPSTVVDNTLCLMIAMEYARQRAISDGHLNMQMRYVCNGDDLLINANEEAKDVVQGKYEQYIKELELNYCFDDAFQSIEGVEFMSHKFMLRNGIYIPKLARHRIVAILEWQRSAEPQAIKSAILAACVEAFGYDDLTELIREYAISLEPVWGSFLPTDGEIEQLYFEGIAKQEVARCLAGVDDVCKFESAASGTNEAVDEVLKAAGDDEALARANAAATSGATTPAQNVGAGTTTPAKATPQSGRRPSFGSLIDNPIGGNGVQDVADRTSGIVFPVPTRKSTSLYLPPKVKLRATPERIEKVRKYLPDPQQIDLRYSTQQELNDWIKASADGLGQTEEAFIDNILPGWIVHCIVNTTSSENRKAGSWRCVTNAGTADEEQVLYDIEPMYSAANPTMRAIMRHFSDLARLVIAESFKQGRPLIPKGYIKAGVLDASSAAAACDFVVRDRHDTATFVQVQNQVLVNRVSGITNRLFAQAMPSAGANEDMARHDAQDAAEGIHNLGGARAF.

In terms of domain architecture, Peptidase S30 spans Lys-255–Tyr-403. Residues His-311, Asp-323, and Ser-355 each act as for P1 proteinase activity in the active site. The region spanning His-690 to Gly-809 is the Peptidase C6 domain. Catalysis depends on for helper component proteinase activity residues Cys-698 and His-769. The region spanning Arg-1215–Leu-1366 is the Helicase ATP-binding domain. An ATP-binding site is contributed by Gly-1228–Ser-1235. Residues Asp-1316–His-1319 carry the DEVH box motif. Positions Pro-1367–Asn-1546 constitute a Helicase C-terminal domain. The short motif at Asp-1883–Gln-1895 is the Nuclear localization signal element. At Tyr-1915 the chain carries O-(5'-phospho-RNA)-tyrosine. A Peptidase C4 domain is found at Ser-2041–Asn-2257. Active-site for nuclear inclusion protein A activity residues include His-2082, Asp-2121, and Cys-2193. A RdRp catalytic domain is found at Glu-2516–Val-2639. The segment covering Asn-2800–Pro-2826 has biased composition (low complexity). A disordered region spans residues Asn-2800–Ile-2842.

This sequence belongs to the potyviridae genome polyprotein family. Post-translationally, VPg is uridylylated by the polymerase and is covalently attached to the 5'-end of the genomic RNA. This uridylylated form acts as a nucleotide-peptide primer for the polymerase. In terms of processing, genome polyprotein of potyviruses undergoes post-translational proteolytic processing by the main proteinase NIa-pro resulting in the production of at least ten individual proteins. The P1 proteinase and the HC-pro cleave only their respective C-termini autocatalytically. 6K1 is essential for proper proteolytic separation of P3 from CI.

It localises to the host cytoplasmic vesicle. Its subcellular location is the virion. The catalysed reaction is RNA(n) + a ribonucleoside 5'-triphosphate = RNA(n+1) + diphosphate. The enzyme catalyses Hydrolyzes glutaminyl bonds, and activity is further restricted by preferences for the amino acids in P6 - P1' that vary with the species of potyvirus, e.g. Glu-Xaa-Xaa-Tyr-Xaa-Gln-|-(Ser or Gly) for the enzyme from tobacco etch virus. The natural substrate is the viral polyprotein, but other proteins and oligopeptides containing the appropriate consensus sequence are also cleaved.. It carries out the reaction Hydrolyzes a Gly-|-Gly bond at its own C-terminus, commonly in the sequence -Tyr-Xaa-Val-Gly-|-Gly, in the processing of the potyviral polyprotein.. In terms of biological role, required for aphid transmission and also has proteolytic activity. Only cleaves a Gly-Gly dipeptide at its own C-terminus. Interacts with virions and aphid stylets. Acts as a suppressor of RNA-mediated gene silencing, also known as post-transcriptional gene silencing (PTGS), a mechanism of plant viral defense that limits the accumulation of viral RNAs. May have RNA-binding activity. Its function is as follows. Has helicase activity. It may be involved in replication. Indispensable for virus replication. Reduces the abundance of host transcripts related to jasmonic acid biosynthesis therefore altering the host defenses. In order to increase its own stability, decreases host protein degradation pathways. Functionally, indispensable for virus replication. In terms of biological role, mediates the cap-independent, EIF4E-dependent translation of viral genomic RNAs. Binds to the cap-binding site of host EIF4E and thus interferes with the host EIF4E-dependent mRNA export and translation. VPg-RNA directly binds EIF4E and is a template for transcription. Also forms trimeric complexes with EIF4E-EIF4G, which are templates for translation. Its function is as follows. Has RNA-binding and proteolytic activities. An RNA-dependent RNA polymerase that plays an essential role in the virus replication. Functionally, involved in aphid transmission, cell-to-cell and systemis movement, encapsidation of the viral RNA and in the regulation of viral RNA amplification. This Brome streak virus (strain 11-Cal) (BStV) protein is Genome polyprotein.